Here is a 373-residue protein sequence, read N- to C-terminus: Chaperone protein DnaJ (373 aa).

Positions 4–69 constitute a J domain; sequence DYYETLSVER…SKRRIYDTYG (66 aa). The segment at 131–209 adopts a CR-type zinc-finger fold; it reads GVSKEVKLSR…CHGEGLVKKT (79 aa). The Zn(2+) site is built by Cys144, Cys147, Cys161, Cys164, Cys183, Cys186, Cys197, and Cys200. CXXCXGXG motif repeat units lie at residues 144-151, 161-168, 183-190, and 197-204; these read CWTCEGTG, CPTCNGRG, CPECEGEG, and CNDCHGEG.

This sequence belongs to the DnaJ family. Homodimer. The cofactor is Zn(2+).

The protein resides in the cytoplasm. Its function is as follows. Participates actively in the response to hyperosmotic and heat shock by preventing the aggregation of stress-denatured proteins and by disaggregating proteins, also in an autonomous, DnaK-independent fashion. Unfolded proteins bind initially to DnaJ; upon interaction with the DnaJ-bound protein, DnaK hydrolyzes its bound ATP, resulting in the formation of a stable complex. GrpE releases ADP from DnaK; ATP binding to DnaK triggers the release of the substrate protein, thus completing the reaction cycle. Several rounds of ATP-dependent interactions between DnaJ, DnaK and GrpE are required for fully efficient folding. Also involved, together with DnaK and GrpE, in the DNA replication of plasmids through activation of initiation proteins. This Desulfotalea psychrophila (strain LSv54 / DSM 12343) protein is Chaperone protein DnaJ.